We begin with the raw amino-acid sequence, 82 residues long: Sec-independent protein translocase protein TatA (82 aa).

The helical transmembrane segment at 1–21 threads the bilayer; sequence MGGISIWQLLIIAVIVVLLFG.

It belongs to the TatA/E family. As to quaternary structure, the Tat system comprises two distinct complexes: a TatABC complex, containing multiple copies of TatA, TatB and TatC subunits, and a separate TatA complex, containing only TatA subunits. Substrates initially bind to the TatABC complex, which probably triggers association of the separate TatA complex to form the active translocon.

It localises to the cell inner membrane. Part of the twin-arginine translocation (Tat) system that transports large folded proteins containing a characteristic twin-arginine motif in their signal peptide across membranes. TatA could form the protein-conducting channel of the Tat system. The sequence is that of Sec-independent protein translocase protein TatA from Vibrio cholerae serotype O1 (strain ATCC 39315 / El Tor Inaba N16961).